We begin with the raw amino-acid sequence, 38 residues long: Large ribosomal subunit protein bL36A (38 aa).

This sequence belongs to the bacterial ribosomal protein bL36 family.

In Prochlorococcus marinus (strain MIT 9515), this protein is Large ribosomal subunit protein bL36A.